A 216-amino-acid chain; its full sequence is NADH-quinone oxidoreductase subunit C (216 aa).

It belongs to the complex I 30 kDa subunit family. As to quaternary structure, NDH-1 is composed of 14 different subunits. Subunits NuoB, C, D, E, F, and G constitute the peripheral sector of the complex.

The protein resides in the cell inner membrane. It catalyses the reaction a quinone + NADH + 5 H(+)(in) = a quinol + NAD(+) + 4 H(+)(out). NDH-1 shuttles electrons from NADH, via FMN and iron-sulfur (Fe-S) centers, to quinones in the respiratory chain. The immediate electron acceptor for the enzyme in this species is believed to be ubiquinone. Couples the redox reaction to proton translocation (for every two electrons transferred, four hydrogen ions are translocated across the cytoplasmic membrane), and thus conserves the redox energy in a proton gradient. The polypeptide is NADH-quinone oxidoreductase subunit C (Francisella tularensis subsp. tularensis (strain FSC 198)).